The primary structure comprises 495 residues: Cobyric acid synthase (495 aa).

The GATase cobBQ-type domain occupies 252–440; that stretch reads RPKVVVLAYP…VHGLFADDGL (189 aa). C334 (nucleophile) is an active-site residue. Residue H432 is part of the active site.

It belongs to the CobB/CobQ family. CobQ subfamily.

It functions in the pathway cofactor biosynthesis; adenosylcobalamin biosynthesis. Its function is as follows. Catalyzes amidations at positions B, D, E, and G on adenosylcobyrinic A,C-diamide. NH(2) groups are provided by glutamine, and one molecule of ATP is hydrogenolyzed for each amidation. The protein is Cobyric acid synthase of Bradyrhizobium sp. (strain ORS 278).